We begin with the raw amino-acid sequence, 549 residues long: Vacuolar fusion protein MON1 homolog A (549 aa).

Disordered stretches follow at residues 1–90 and 109–137; these read MAAD…EQIS and EEMR…GKEE. Residues 110 to 119 show a composition bias toward basic and acidic residues; that stretch reads EMRQSQEGKL.

The protein belongs to the MON1/SAND family.

Its function is as follows. Plays an important role in membrane trafficking through the secretory apparatus. Not involved in endocytic trafficking to lysosomes. The sequence is that of Vacuolar fusion protein MON1 homolog A (MON1A) from Gallus gallus (Chicken).